The chain runs to 394 residues: MIIQPRVRGFVCVTSHPVGCAAHVQEWIDYVKSKGVIAHGPKKVLVIGASTGYGLASRVTAAFGSGAATIGVFYERPSEEGRLATPGWYNSIGFTRAARAAGLYARNFNGDAFSDDIKKQVLDAIKADLGQVDLVIYSLASPRRTHPRTGTVHKSVLKPVGAPYTNKTVDTDTGIVSEITIEPATETEIADTIAVMGGEDWELWMHALRDANLLAPNAQTVAYSYIGPEVTWPVYKNGTIGLAKNDLERAAQALDALLKPTGGRAFIAVNKALVTQASSAIPVVPLYISILYKIMKARGTHERCIEQMQRLFATHMYNGQTPRFDETGRVRIDDLEMAPEVQAAVREIWPTVTTANLVERTDIAGYRSEFLRLFGFGMPGVDYQADVDPHIPMI.

NAD(+) contacts are provided by residues 48 to 53 (GASTGY), 74 to 75 (YE), 111 to 112 (DA), and 139 to 140 (LA). Y225 serves as a coordination point for substrate. Catalysis depends on Y235, which acts as the Proton donor. NAD(+) is bound by residues K244 and 273-275 (LVT).

The protein belongs to the TER reductase family. In terms of assembly, monomer.

The enzyme catalyses a 2,3-saturated acyl-[ACP] + NAD(+) = a (2E)-enoyl-[ACP] + NADH + H(+). It functions in the pathway lipid metabolism; fatty acid biosynthesis. In terms of biological role, involved in the final reduction of the elongation cycle of fatty acid synthesis (FAS II). Catalyzes the reduction of a carbon-carbon double bond in an enoyl moiety that is covalently linked to an acyl carrier protein (ACP). In Opitutus terrae (strain DSM 11246 / JCM 15787 / PB90-1), this protein is Enoyl-[acyl-carrier-protein] reductase [NADH].